A 186-amino-acid polypeptide reads, in one-letter code: MKNVNDSFVSLGHWPFAGSFGFNTDILATNPINLSVVLGVLIFFGKGVLNDLLDNRKQRILSTIRNSEELRGGAIEQLEKAWARLRKVEMEADEFRVNGYSEIEREKMNLIIATNENLERLENYKNETIHFEQQRAINQVRQRVFQQALQGALGTLKSCLNSELHLRTISDNIGTLGDMNMKEITD.

The helical transmembrane segment at 27-49 (LATNPINLSVVLGVLIFFGKGVL) threads the bilayer.

Belongs to the ATPase B chain family. As to quaternary structure, F-type ATPases have 2 components, F(1) - the catalytic core - and F(0) - the membrane proton channel. F(1) has five subunits: alpha(3), beta(3), gamma(1), delta(1), epsilon(1). F(0) has four main subunits: a(1), b(1), b'(1) and c(10-14). The alpha and beta chains form an alternating ring which encloses part of the gamma chain. F(1) is attached to F(0) by a central stalk formed by the gamma and epsilon chains, while a peripheral stalk is formed by the delta, b and b' chains.

The protein localises to the plastid. It is found in the chloroplast thylakoid membrane. Its function is as follows. F(1)F(0) ATP synthase produces ATP from ADP in the presence of a proton or sodium gradient. F-type ATPases consist of two structural domains, F(1) containing the extramembraneous catalytic core and F(0) containing the membrane proton channel, linked together by a central stalk and a peripheral stalk. During catalysis, ATP synthesis in the catalytic domain of F(1) is coupled via a rotary mechanism of the central stalk subunits to proton translocation. Functionally, component of the F(0) channel, it forms part of the peripheral stalk, linking F(1) to F(0). The chain is ATP synthase subunit b, chloroplastic from Illicium oligandrum (Star anise).